Consider the following 89-residue polypeptide: Phosphocarrier protein HPr (89 aa).

Residues 1 to 89 (MERTVTVVPE…DILSTPEAKQ (89 aa)) enclose the HPr domain. Residue histidine 14 is the Pros-phosphohistidine intermediate of the active site. A Phosphoserine; by HPrK/P modification is found at serine 47.

Belongs to the HPr family.

The protein resides in the cytoplasm. Phosphorylation on Ser-47 inhibits the phosphoryl transfer from enzyme I to HPr. Functionally, general (non sugar-specific) component of the phosphoenolpyruvate-dependent sugar phosphotransferase system (sugar PTS). This major carbohydrate active-transport system catalyzes the phosphorylation of incoming sugar substrates concomitantly with their translocation across the cell membrane. The phosphoryl group from phosphoenolpyruvate (PEP) is transferred to the phosphoryl carrier protein HPr by enzyme I. Phospho-HPr then transfers it to the PTS EIIA domain. Is involved in fructose transport. This is Phosphocarrier protein HPr (ptsH1) from Haloferax volcanii (strain ATCC 29605 / DSM 3757 / JCM 8879 / NBRC 14742 / NCIMB 2012 / VKM B-1768 / DS2) (Halobacterium volcanii).